Here is a 1084-residue protein sequence, read N- to C-terminus: Histone deacetylase 4 (1084 aa).

The stretch at 67–177 (REQQLQQELL…STEVKMKLQE (111 aa)) forms a coiled coil. The tract at residues 118–313 (MLAMKHQQEL…NNSSGSVSAE (196 aa)) is interaction with MEF2A. Over residues 133–163 (KLERHRQEQELEKQHREQKLQQLKNKEKGKE) the composition is skewed to basic and acidic residues. Disordered stretches follow at residues 133–166 (KLERHRQEQELEKQHREQKLQQLKNKEKGKESAV), 206–226 (TQHSSLDQSSPPQSGVSTSYN), and 240–315 (PLRK…AENG). Position 210 is a phosphoserine (Ser210). Ser246 carries the post-translational modification Phosphoserine; by CaMK4 and SIK1. Residues 259 to 274 (KVAERRSSPLLRRKDG) show a composition bias toward basic and acidic residues. Residues 290-312 (SACSSAPGSGPSSPNNSSGSVSA) show a composition bias toward low complexity. The PxLPxI/L motif; mediates interaction with ANKRA2 and 14-3-3 proteins signature appears at 349 to 354 (PSLPNI). Ser350 bears the Phosphoserine mark. The residue at position 467 (Ser467) is a Phosphoserine; by CaMK4 and SIK1. 3 disordered regions span residues 509-531 (PKPSEPARQPESHPEETEEELRE), 548-585 (KEAHAQAGVQVKQEPIESDEEEAEPPREVEPGQRQPSE), and 626-646 (PLSRAQSSPASATFPVSVQEP). Residues 516–531 (RQPESHPEETEEELRE) show a composition bias toward basic and acidic residues. A Glycyl lysine isopeptide (Lys-Gly) (interchain with G-Cter in SUMO) cross-link involves residue Lys559. Position 565 is a phosphoserine (Ser565). The segment covering 629–641 (RAQSSPASATFPV) has biased composition (polar residues). The residue at position 632 (Ser632) is a Phosphoserine; by CaMK4. Phosphoserine is present on Ser633. Residues 655-1084 (GLVYDTLMLK…EEPMEEEPPL (430 aa)) form a histone deacetylase region. Zn(2+) is bound by residues Cys667, Cys669, His675, and Cys751. The active site involves His803. A Nuclear export signal motif is present at residues 1051–1084 (EEAETVTAMASLSVGVKPAEKRPDEEPMEEEPPL). Positions 1061–1084 (SLSVGVKPAEKRPDEEPMEEEPPL) are disordered.

This sequence belongs to the histone deacetylase family. HD type 2 subfamily. In terms of assembly, homodimer. Homodimerization via its N-terminal domain. Interacts with MEF2A. Interacts with MEF2C and MEF2D. Interacts with AHRR. Interacts with NR2C1. Interacts with HDAC7. Interacts with a 14-3-3 chaperone proteins in a phosphorylation dependent manner. Interacts with 14-3-3 protein YWHAB. Interacts with BTBD14B. Interacts with KDM5B. Interacts with MYOCD. Interacts with MORC2. Interacts (via PxLPxI/L motif) with ANKRA2 (via ankyrin repeats). Interacts with CUL7 (as part of the 3M complex); negatively regulated by ANKRA2. Interacts with EP300 in the presence of TFAP2C. Interacts with HSPA1A and HSPA1B leading to their deacetylation at 'Lys-77'. Interacts with ZBTB7B; the interaction allows the recruitment of HDAC4 on CD8 loci for deacetylation and possible inhibition of CD8 genes expression. Interacts with DHX36. Interacts with SIK3; this interaction leads to HDAC4 retention in the cytoplasm. Interacts with ZNF638. Post-translationally, phosphorylated by CaMK4 at Ser-246, Ser-467 and Ser-632. Phosphorylation at other residues by CaMK2D is required for the interaction with 14-3-3. Phosphorylation at Ser-350, within the PxLPxI/L motif, impairs the binding of ANKRA2 but generates a high-affinity docking site for 14-3-3. In terms of processing, sumoylation on Lys-559 is promoted by the E3 SUMO-protein ligase RANBP2, and prevented by phosphorylation by CaMK4. As to expression, ubiquitous.

It localises to the nucleus. It is found in the cytoplasm. It carries out the reaction N(6)-acetyl-L-lysyl-[histone] + H2O = L-lysyl-[histone] + acetate. Functionally, responsible for the deacetylation of lysine residues on the N-terminal part of the core histones (H2A, H2B, H3 and H4). Histone deacetylation gives a tag for epigenetic repression and plays an important role in transcriptional regulation, cell cycle progression and developmental events. Histone deacetylases act via the formation of large multiprotein complexes. Involved in muscle maturation via its interaction with the myocyte enhancer factors such as MEF2A, MEF2C and MEF2D. Involved in the MTA1-mediated epigenetic regulation of ESR1 expression in breast cancer. Deacetylates HSPA1A and HSPA1B at 'Lys-77' leading to their preferential binding to co-chaperone STUB1. This chain is Histone deacetylase 4, found in Homo sapiens (Human).